The chain runs to 836 residues: Lon protease (836 aa).

Residues 41 to 233 enclose the Lon N-terminal domain; it reads LPVLPLRNTV…RLIHFLNREV (193 aa). 385–392 contributes to the ATP binding site; that stretch reads GPPGVGKT. One can recognise a Lon proteolytic domain in the interval 627–811; it reads VMLSGVAVGL…DDLIDYVLEP (185 aa). Active-site residues include S714 and K757. The disordered stretch occupies residues 816-836; sequence APQFKVEDKDHTPETTGNESE.

This sequence belongs to the peptidase S16 family. In terms of assembly, homohexamer. Organized in a ring with a central cavity.

The protein resides in the cytoplasm. The enzyme catalyses Hydrolysis of proteins in presence of ATP.. In terms of biological role, ATP-dependent serine protease that mediates the selective degradation of mutant and abnormal proteins as well as certain short-lived regulatory proteins. Required for cellular homeostasis and for survival from DNA damage and developmental changes induced by stress. Degrades polypeptides processively to yield small peptide fragments that are 5 to 10 amino acids long. Binds to DNA in a double-stranded, site-specific manner. In Chloroherpeton thalassium (strain ATCC 35110 / GB-78), this protein is Lon protease.